A 236-amino-acid chain; its full sequence is 2,3,4,5-tetrahydropyridine-2,6-dicarboxylate N-acetyltransferase (236 aa).

It belongs to the transferase hexapeptide repeat family. DapH subfamily.

The enzyme catalyses (S)-2,3,4,5-tetrahydrodipicolinate + acetyl-CoA + H2O = L-2-acetamido-6-oxoheptanedioate + CoA. It participates in amino-acid biosynthesis; L-lysine biosynthesis via DAP pathway; LL-2,6-diaminopimelate from (S)-tetrahydrodipicolinate (acetylase route): step 1/3. Its function is as follows. Catalyzes the transfer of an acetyl group from acetyl-CoA to tetrahydrodipicolinate. The protein is 2,3,4,5-tetrahydropyridine-2,6-dicarboxylate N-acetyltransferase of Brevibacillus brevis (strain 47 / JCM 6285 / NBRC 100599).